Here is a 520-residue protein sequence, read N- to C-terminus: MTQTAQPDTVLIVDFGSQVTQLIARRVREAGVYCEIVPFQSADAGFKRLQPKAVILSGSPASTVDEGSPRAPQIIFDSGVPVFGICYGQQTMCMQLGGKVESGHHREFGRAFLDVNKDCALFEGLWSSGSRHQVWMSHGDRVTALPDGFEVVATSSNAPYAFIADEKRKYYGVQFHPEVVHTPDGAKLIGNFIHNIAGIKGDWSMSAYRAKAVQAIRDQVGDKRVICALSGGVDSSVAALLIHEAVGDQLTCILVDHGLMRKDEAANVVAMFSEHYNLHLLHVDASERFIGELEGVSDPETKRKIIGRLFIETFEEEAKKLGGADFLGQGTLYPDVIESVSFTGGPSVTIKSHHNVGGLPERMNMQLVEPLRELFKDEVRALGKELGLPDSFIGRHPFPGPGLAIRCPGGITREKLEILREADAIYLDEIRKAGLYDAIWQAFAVLLPVQTVGVMGDGRTYEFVCALRAVTSVDGMTADFYHYDMEFLGRAATRIINEVRGINRVVYDVTSKPPGTIEWE.

The region spanning 9–202 (TVLIVDFGSQ…IHNIAGIKGD (194 aa)) is the Glutamine amidotransferase type-1 domain. C86 functions as the Nucleophile in the catalytic mechanism. Active-site residues include H176 and E178. The GMPS ATP-PPase domain maps to 203–395 (WSMSAYRAKA…LGLPDSFIGR (193 aa)). Position 230-236 (230-236 (SGGVDSS)) interacts with ATP.

As to quaternary structure, homodimer.

The enzyme catalyses XMP + L-glutamine + ATP + H2O = GMP + L-glutamate + AMP + diphosphate + 2 H(+). It functions in the pathway purine metabolism; GMP biosynthesis; GMP from XMP (L-Gln route): step 1/1. In terms of biological role, catalyzes the synthesis of GMP from XMP. This is GMP synthase [glutamine-hydrolyzing] from Rhizobium rhizogenes (strain K84 / ATCC BAA-868) (Agrobacterium radiobacter).